A 364-amino-acid chain; its full sequence is Anhydro-N-acetylmuramic acid kinase (364 aa).

11–18 contacts ATP; it reads GSSLDGID.

This sequence belongs to the anhydro-N-acetylmuramic acid kinase family.

The enzyme catalyses 1,6-anhydro-N-acetyl-beta-muramate + ATP + H2O = N-acetyl-D-muramate 6-phosphate + ADP + H(+). Its pathway is amino-sugar metabolism; 1,6-anhydro-N-acetylmuramate degradation. The protein operates within cell wall biogenesis; peptidoglycan recycling. Catalyzes the specific phosphorylation of 1,6-anhydro-N-acetylmuramic acid (anhMurNAc) with the simultaneous cleavage of the 1,6-anhydro ring, generating MurNAc-6-P. Is required for the utilization of anhMurNAc either imported from the medium or derived from its own cell wall murein, and thus plays a role in cell wall recycling. The protein is Anhydro-N-acetylmuramic acid kinase of Pseudomonas syringae pv. syringae (strain B728a).